We begin with the raw amino-acid sequence, 120 residues long: Large ribosomal subunit protein uL18 (120 aa).

It belongs to the universal ribosomal protein uL18 family. In terms of assembly, part of the 50S ribosomal subunit; part of the 5S rRNA/L5/L18/L25 subcomplex. Contacts the 5S and 23S rRNAs.

In terms of biological role, this is one of the proteins that bind and probably mediate the attachment of the 5S RNA into the large ribosomal subunit, where it forms part of the central protuberance. The chain is Large ribosomal subunit protein uL18 from Nitrobacter winogradskyi (strain ATCC 25391 / DSM 10237 / CIP 104748 / NCIMB 11846 / Nb-255).